The primary structure comprises 1096 residues: Serine/threonine-protein kinase mig-15 (1096 aa).

In terms of domain architecture, Protein kinase spans Phe-21 to Ile-288. ATP is bound by residues Val-27–Val-35 and Lys-50. Asp-151 acts as the Proton acceptor in catalysis. A compositionally biased stretch (basic and acidic residues) spans His-293–Asp-315. Disordered stretches follow at residues His-293–Met-351, Leu-380–Arg-492, Lys-517–Ile-545, and Asn-574–Pro-664. The span at Ala-316–Pro-328 shows a compositional bias: acidic residues. Residues Leu-380–Gln-393 are compositionally biased toward low complexity. Composition is skewed to basic and acidic residues over residues Val-397 to Leu-408 and Asn-453 to Ala-472. Over residues Ser-532–Arg-541 the composition is skewed to pro residues. The segment covering Leu-629–Asn-642 has biased composition (acidic residues). A CNH domain is found at Ser-778 to Val-1070.

This sequence belongs to the protein kinase superfamily. STE Ser/Thr protein kinase family. STE20 subfamily.

The enzyme catalyses L-seryl-[protein] + ATP = O-phospho-L-seryl-[protein] + ADP + H(+). It carries out the reaction L-threonyl-[protein] + ATP = O-phospho-L-threonyl-[protein] + ADP + H(+). Its function is as follows. Involved in cell migration and signal transduction. Important in several developmental processes including epidermal development, Q neuroblast migrations and muscle arm targeting. Required with ina-1/pat-3 to stabilize the commissural axons growth cone along a precise direction and are required for the cell to respond appropriately when signaling in the growth cone must change. During gonad morphogenesis, involved in distal tip cell (DTC) migration from the dorsal side of the hermaphrodite body to the midbody to allow for formation of gonad arms. This Caenorhabditis elegans protein is Serine/threonine-protein kinase mig-15 (mig-15).